Here is a 78-residue protein sequence, read N- to C-terminus: uncharacterized protein (78 aa).

The disordered stretch occupies residues 1-28 (MGGGNAQKSAMARAKNLEKAKAAGKGSQ).

This is an uncharacterized protein from Arabidopsis thaliana (Mouse-ear cress).